A 336-amino-acid chain; its full sequence is uncharacterized protein (336 aa).

An ATP-grasp domain is found at 123–323; the sequence is KTLMRDSGVP…YSSLINGILD (201 aa).

This sequence belongs to the D-alanine--D-alanine ligase family.

Its function is as follows. Could be involved in the biosynthesis of a cell wall component. This is an uncharacterized protein from Sinorhizobium fredii (strain NBRC 101917 / NGR234).